Here is a 256-residue protein sequence, read N- to C-terminus: Acetyl-coenzyme A carboxylase carboxyl transferase subunit alpha (256 aa).

The region spanning 1-236 (MTDVARILKE…KSHLIDEITQ (236 aa)) is the CoA carboxyltransferase C-terminal domain.

The protein belongs to the AccA family. Acetyl-CoA carboxylase is a heterohexamer composed of biotin carboxyl carrier protein (AccB), biotin carboxylase (AccC) and two subunits each of ACCase subunit alpha (AccA) and ACCase subunit beta (AccD).

It is found in the cytoplasm. The catalysed reaction is N(6)-carboxybiotinyl-L-lysyl-[protein] + acetyl-CoA = N(6)-biotinyl-L-lysyl-[protein] + malonyl-CoA. The protein operates within lipid metabolism; malonyl-CoA biosynthesis; malonyl-CoA from acetyl-CoA: step 1/1. Functionally, component of the acetyl coenzyme A carboxylase (ACC) complex. First, biotin carboxylase catalyzes the carboxylation of biotin on its carrier protein (BCCP) and then the CO(2) group is transferred by the carboxyltransferase to acetyl-CoA to form malonyl-CoA. This chain is Acetyl-coenzyme A carboxylase carboxyl transferase subunit alpha, found in Streptococcus equi subsp. equi (strain 4047).